Reading from the N-terminus, the 368-residue chain is Protein Wnt-1 (368 aa).

A signal peptide spans 1-25; sequence MRGPALLLALRALCALSALRGTARA. 11 disulfide bridges follow: Cys91–Cys102, Cys141–Cys149, Cys151–Cys168, Cys216–Cys230, Cys218–Cys225, Cys297–Cys328, Cys313–Cys323, Cys327–Cys367, Cys343–Cys358, Cys345–Cys355, and Cys350–Cys351. Ser222 is lipidated: O-palmitoleoyl serine; by PORCN.

It belongs to the Wnt family. As to quaternary structure, forms a soluble 1:1 complex with AFM; this prevents oligomerization and is required for prolonged biological activity. The complex with AFM may represent the physiological form in body fluids. Interacts with PORCN. In terms of processing, N-glycosylated. N-glycosylation favors subsequent palmitoleoylation. Palmitoleoylation is required for efficient binding to frizzled receptors. Palmitoleoylation is necessary for proper trafficking to cell surface. Depalmitoleoylated by NOTUM, leading to inhibit Wnt signaling pathway.

The protein resides in the secreted. It is found in the extracellular space. The protein localises to the extracellular matrix. In terms of biological role, ligand for members of the frizzled family of seven transmembrane receptors. Acts in the canonical Wnt signaling pathway by promoting beta-catenin-dependent transcriptional activation. Developmental protein that promotes cell proliferation in the developing spinal cord. Has a role in osteoblast function, bone development and bone homeostasis. The sequence is that of Protein Wnt-1 (WNT1) from Gallus gallus (Chicken).